A 183-amino-acid chain; its full sequence is Glutathione-regulated potassium-efflux system ancillary protein KefG (183 aa).

This sequence belongs to the NAD(P)H dehydrogenase (quinone) family. KefG subfamily. In terms of assembly, interacts with KefB.

It localises to the cell inner membrane. The catalysed reaction is a quinone + NADH + H(+) = a quinol + NAD(+). It catalyses the reaction a quinone + NADPH + H(+) = a quinol + NADP(+). Regulatory subunit of a potassium efflux system that confers protection against electrophiles. Required for full activity of KefB. This chain is Glutathione-regulated potassium-efflux system ancillary protein KefG, found in Pectobacterium atrosepticum (strain SCRI 1043 / ATCC BAA-672) (Erwinia carotovora subsp. atroseptica).